Reading from the N-terminus, the 515-residue chain is ATP synthase subunit alpha (515 aa).

Residue 171 to 178 (GDRQTGKT) coordinates ATP.

This sequence belongs to the ATPase alpha/beta chains family. F-type ATPases have 2 components, CF(1) - the catalytic core - and CF(0) - the membrane proton channel. CF(1) has five subunits: alpha(3), beta(3), gamma(1), delta(1), epsilon(1). CF(0) has three main subunits: a(1), b(2) and c(9-12). The alpha and beta chains form an alternating ring which encloses part of the gamma chain. CF(1) is attached to CF(0) by a central stalk formed by the gamma and epsilon chains, while a peripheral stalk is formed by the delta and b chains.

The protein localises to the cell inner membrane. The enzyme catalyses ATP + H2O + 4 H(+)(in) = ADP + phosphate + 5 H(+)(out). In terms of biological role, produces ATP from ADP in the presence of a proton gradient across the membrane. The alpha chain is a regulatory subunit. The sequence is that of ATP synthase subunit alpha from Xanthomonas axonopodis pv. citri (strain 306).